The chain runs to 351 residues: Peptide chain release factor 1 (351 aa).

Q233 carries the N5-methylglutamine modification.

It belongs to the prokaryotic/mitochondrial release factor family. In terms of processing, methylated by PrmC. Methylation increases the termination efficiency of RF1.

The protein resides in the cytoplasm. Its function is as follows. Peptide chain release factor 1 directs the termination of translation in response to the peptide chain termination codons UAG and UAA. The polypeptide is Peptide chain release factor 1 (Treponema pallidum subsp. pallidum (strain SS14)).